A 96-amino-acid chain; its full sequence is MKLKPLGDRVLVKRLEQEEVTKGGIIIPDSAKEKPMKGEVIAVGPGKLAEDGKHLKMHVEKGDLVLFNKYAGTEIKVDDEDFLVMREDDILAVIEA.

The protein belongs to the GroES chaperonin family. Heptamer of 7 subunits arranged in a ring. Interacts with the chaperonin GroEL.

It is found in the cytoplasm. Together with the chaperonin GroEL, plays an essential role in assisting protein folding. The GroEL-GroES system forms a nano-cage that allows encapsulation of the non-native substrate proteins and provides a physical environment optimized to promote and accelerate protein folding. GroES binds to the apical surface of the GroEL ring, thereby capping the opening of the GroEL channel. The protein is Co-chaperonin GroES of Solidesulfovibrio magneticus (strain ATCC 700980 / DSM 13731 / RS-1) (Desulfovibrio magneticus).